A 366-amino-acid polypeptide reads, in one-letter code: MTPEHLPTEQYEAQLAEKVVRLQSMMAPFSDLVPEVFRSPVSHYRMRAEFRIWHDGDDLYHIIFDQQTKSRIRVDSFPAASELINQLMTAMIAGVRNNPVLRHKLFQIDYLTTLSNQAVVSLLYHKKLDDEWRQEAEALRDALRAQNLNVHLIGRATKTKIELDQDYIDERLPVAGKEMIYRQVENSFTQPNAAMNIQMLEWALDVTKGSKGDLLELYCGNGNFSLALARNFDRVLATEIAKPSVAAAQYNIAANHIDNVQIIRMAAEEFTQAMNGVREFNRLQGIDLKSYQCETIFVDPPRSGLDGETEKMVQAYPRILYISCNPETLCKNLETLSQTHKVERLALFDQFPYTHHMECGVLLTAK.

Residues Gln190, Tyr218, Asn223, Glu239, and Asp299 each coordinate S-adenosyl-L-methionine. Cys324 serves as the catalytic Nucleophile. Catalysis depends on Glu358, which acts as the Proton acceptor.

The protein belongs to the class I-like SAM-binding methyltransferase superfamily. RNA M5U methyltransferase family. TrmA subfamily.

It carries out the reaction uridine(54) in tRNA + S-adenosyl-L-methionine = 5-methyluridine(54) in tRNA + S-adenosyl-L-homocysteine + H(+). It catalyses the reaction uridine(341) in tmRNA + S-adenosyl-L-methionine = 5-methyluridine(341) in tmRNA + S-adenosyl-L-homocysteine + H(+). Functionally, dual-specificity methyltransferase that catalyzes the formation of 5-methyluridine at position 54 (m5U54) in all tRNAs, and that of position 341 (m5U341) in tmRNA (transfer-mRNA). This chain is tRNA/tmRNA (uracil-C(5))-methyltransferase, found in Escherichia coli O17:K52:H18 (strain UMN026 / ExPEC).